The primary structure comprises 71 residues: uncharacterized protein (71 aa).

This is an uncharacterized protein from Escherichia coli (strain K12).